We begin with the raw amino-acid sequence, 776 residues long: Chitin synthase 1 (776 aa).

The next 6 membrane-spanning stretches (helical) occupy residues 451–471 (LVSL…FYFL), 487–507 (FWIF…LFIV), 523–543 (LIIL…VFVI), 558–578 (VLVS…LMSI), 695–714 (VVLF…VQVY), and 723–743 (IYLA…AIGS).

This sequence belongs to the chitin synthase family.

The protein localises to the cell membrane. It carries out the reaction [(1-&gt;4)-N-acetyl-beta-D-glucosaminyl](n) + UDP-N-acetyl-alpha-D-glucosamine = [(1-&gt;4)-N-acetyl-beta-D-glucosaminyl](n+1) + UDP + H(+). Requires proteolytic activation. Its function is as follows. Polymerizes chitin, a structural polymer of the cell wall and septum, by transferring the sugar moiety of UDP-GlcNAc to the non-reducing end of the growing chitin polymer. Also involved in forming cross walls in the hyphal phase. The sequence is that of Chitin synthase 1 (CHS1) from Candida albicans (Yeast).